The primary structure comprises 857 residues: Mitogen-activated protein kinase kinase kinase dlk-1 (857 aa).

Positions 62–304 constitute a Protein kinase domain; sequence ISNLEWLGSG…FSHIRQHWEI (243 aa). Residues 68–76 and Lys89 each bind ATP; that span reads LGSGSQGAV. Catalysis depends on Asp173, which acts as the Proton acceptor. 4 disordered regions span residues 441 to 503, 572 to 625, 733 to 775, and 818 to 857; these read EEMS…ISRN, RIAS…PSRN, NAND…MESE, and HSIKTHRRTSSNPQAIIHQRIEEYSSSATEDSDDAGAVRI. Residues 467–488 show a composition bias toward low complexity; sequence SSGAQSSPFSRQSSCRSSAGQQ. A compositionally biased stretch (polar residues) spans 609 to 623; sequence APRSSSKLNRSSYPS. Over residues 753 to 762 the composition is skewed to acidic residues; that stretch reads ADVESSEDEG. The segment covering 763–772 has biased composition (polar residues); sequence NGNNILNTSM.

Belongs to the protein kinase superfamily. STE Ser/Thr protein kinase family. MAP kinase kinase kinase subfamily. Mg(2+) is required as a cofactor. Post-translationally, ubiquitinated by rpm-1. Negatively regulated by ubiquitination by fsn-1 bound rpm-1, followed by degradation.

Its subcellular location is the synapse. It catalyses the reaction L-seryl-[protein] + ATP = O-phospho-L-seryl-[protein] + ADP + H(+). It carries out the reaction L-threonyl-[protein] + ATP = O-phospho-L-threonyl-[protein] + ADP + H(+). Its function is as follows. Component of a MAP kinase pathway that functions presynaptically to regulate synaptic architecture and presynaptic differentiation. Phosphorylates and activates mkk-4. This chain is Mitogen-activated protein kinase kinase kinase dlk-1, found in Caenorhabditis briggsae.